A 286-amino-acid chain; its full sequence is Polyamine aminopropyltransferase (286 aa).

In terms of domain architecture, PABS spans proline 5–aspartate 238. Glutamine 33 contributes to the S-methyl-5'-thioadenosine binding site. Positions 64 and 88 each coordinate spermidine. Residues glutamate 108 and aspartate 140–glycine 141 each bind S-methyl-5'-thioadenosine. Aspartate 158 functions as the Proton acceptor in the catalytic mechanism. Aspartate 158–aspartate 161 serves as a coordination point for spermidine. Proline 165 lines the S-methyl-5'-thioadenosine pocket.

This sequence belongs to the spermidine/spermine synthase family. As to quaternary structure, homodimer or homotetramer.

It localises to the cytoplasm. It catalyses the reaction S-adenosyl 3-(methylsulfanyl)propylamine + putrescine = S-methyl-5'-thioadenosine + spermidine + H(+). Its pathway is amine and polyamine biosynthesis; spermidine biosynthesis; spermidine from putrescine: step 1/1. Functionally, catalyzes the irreversible transfer of a propylamine group from the amino donor S-adenosylmethioninamine (decarboxy-AdoMet) to putrescine (1,4-diaminobutane) to yield spermidine. This Klebsiella pneumoniae subsp. pneumoniae (strain ATCC 700721 / MGH 78578) protein is Polyamine aminopropyltransferase.